A 297-amino-acid polypeptide reads, in one-letter code: tRNA pseudouridine synthase B (297 aa).

Catalysis depends on D39, which acts as the Nucleophile.

It belongs to the pseudouridine synthase TruB family. Type 1 subfamily.

It carries out the reaction uridine(55) in tRNA = pseudouridine(55) in tRNA. Responsible for synthesis of pseudouridine from uracil-55 in the psi GC loop of transfer RNAs. The polypeptide is tRNA pseudouridine synthase B (Lactobacillus acidophilus (strain ATCC 700396 / NCK56 / N2 / NCFM)).